The following is a 237-amino-acid chain: Small ribosomal subunit protein uS2m (237 aa).

The protein belongs to the universal ribosomal protein uS2 family.

The protein localises to the mitochondrion. In Marchantia polymorpha (Common liverwort), this protein is Small ribosomal subunit protein uS2m (RPS2).